The chain runs to 456 residues: UDP-N-acetylmuramate--L-alanine ligase (456 aa).

114–120 is a binding site for ATP; the sequence is GTHGKTT.

This sequence belongs to the MurCDEF family.

The protein resides in the cytoplasm. The catalysed reaction is UDP-N-acetyl-alpha-D-muramate + L-alanine + ATP = UDP-N-acetyl-alpha-D-muramoyl-L-alanine + ADP + phosphate + H(+). The protein operates within cell wall biogenesis; peptidoglycan biosynthesis. Its function is as follows. Cell wall formation. The chain is UDP-N-acetylmuramate--L-alanine ligase from Porphyromonas gingivalis (strain ATCC 33277 / DSM 20709 / CIP 103683 / JCM 12257 / NCTC 11834 / 2561).